Reading from the N-terminus, the 454-residue chain is Notoamide biosynthesis cluster protein M' (454 aa).

N-linked (GlcNAc...) asparagine glycosylation is found at asparagine 51 and asparagine 74. Residues 205-219 (KARSKEKKPKRKKSK) show a composition bias toward basic residues. Positions 205-224 (KARSKEKKPKRKKSKAEKEH) are disordered. 2 consecutive transmembrane segments (helical) span residues 334–354 (MTTV…SGLF) and 375–395 (FWMY…VWGV).

It localises to the membrane. Functionally, part of the gene cluster that mediates the biosynthesis of notoamide, a fungal indole alkaloid that belongs to a family of natural products containing a characteristic bicyclo[2.2.2]diazaoctane core. The first step of notoamide biosynthesis involves coupling of L-proline and L-tryptophan by the bimodular NRPS notE', to produce cyclo-L-tryptophan-L-proline called brevianamide F. The reverse prenyltransferase notF' then acts as a deoxybrevianamide E synthase and converts brevianamide F to deoxybrevianamide E via reverse prenylation at C-2 of the indole ring leading to the bicyclo[2.2.2]diazaoctane core. Deoxybrevianamide E is further hydroxylated at C-6 of the indole ring, likely catalyzed by the cytochrome P450 monooxygenase notG', to yield 6-hydroxy-deoxybrevianamide E. 6-hydroxy-deoxybrevianamide E is a specific substrate of the prenyltransferase notC' for normal prenylation at C-7 to produce 6-hydroxy-7-prenyl-deoxybrevianamide, also called notoamide S. As the proposed pivotal branching point in notoamide biosynthesis, notoamide S can be diverted to notoamide E through an oxidative pyran ring closure putatively catalyzed by either notH' cytochrome P450 monooxygenase or the notD' FAD-linked oxidoreductase. This step would be followed by an indole 2,3-epoxidation-initiated pinacol-like rearrangement catalyzed by the notB' FAD-dependent monooxygenase leading to the formation of notoamide C and notoamide D. On the other hand notoamide S is converted to notoamide T by notH' (or notD'), a bifunctional oxidase that also functions as the intramolecular Diels-Alderase responsible for generation of (-)-notoamide T. To generate antipodal (+)-notoaminide T, notH (or notD) in Aspergillus strain MF297-2 is expected to catalyze a Diels-Alder reaction leading to the opposite stereochemistry. The remaining oxidoreductase notD' (or notH') likely catalyzes the oxidative pyran ring formation to yield (-)-stephacidin A. The FAD-dependent monooxygenase notI' is highly similar to notB' and is predicted to catalyze a similar conversion from (-)-stephacidin A to (+)-notoamide B via the 2,3-epoxidation of (-)-stephacidin A followed by a pinacol-type rearrangement. Finally, it remains unclear which enzyme could be responsible for the final hydroxylation steps leading to notoamide A and sclerotiamide. The function of notM' in the notoamide biosynthesis has not been determined yet. In Aspergillus versicolor, this protein is Notoamide biosynthesis cluster protein M'.